A 144-amino-acid chain; its full sequence is Large ribosomal subunit protein uL15 (144 aa).

Residues 24-52 (GSGLGKTAGRGHKGLKSRSGGSVRPGFEG) form a disordered region.

This sequence belongs to the universal ribosomal protein uL15 family. As to quaternary structure, part of the 50S ribosomal subunit.

In terms of biological role, binds to the 23S rRNA. The protein is Large ribosomal subunit protein uL15 of Cellvibrio japonicus (strain Ueda107) (Pseudomonas fluorescens subsp. cellulosa).